Here is an 885-residue protein sequence, read N- to C-terminus: Putative membrane protein YdgH (885 aa).

A run of 7 helical transmembrane segments spans residues tryptophan 9 to leucine 29, isoleucine 181 to valine 201, valine 202 to phenylalanine 222, phenylalanine 227 to leucine 247, isoleucine 278 to phenylalanine 298, valine 304 to valine 324, and valine 354 to threonine 374. The interval methionine 498–alanine 518 is disordered. A run of 5 helical transmembrane segments spans residues methionine 716 to methionine 736, methionine 740 to valine 760, valine 772 to leucine 792, valine 817 to valine 837, and isoleucine 847 to isoleucine 867.

Belongs to the resistance-nodulation-cell division (RND) (TC 2.A.6) family. MmpL subfamily.

It is found in the cell membrane. In Bacillus subtilis (strain 168), this protein is Putative membrane protein YdgH (ydgH).